Reading from the N-terminus, the 610-residue chain is Elongation factor 4 (610 aa).

Positions 11-193 (EKIRNFSIIA…QIVEKVPAPS (183 aa)) constitute a tr-type G domain. GTP is bound by residues 23-28 (DHGKST) and 140-143 (NKID).

It belongs to the TRAFAC class translation factor GTPase superfamily. Classic translation factor GTPase family. LepA subfamily.

Its subcellular location is the cell membrane. The enzyme catalyses GTP + H2O = GDP + phosphate + H(+). In terms of biological role, required for accurate and efficient protein synthesis under certain stress conditions. May act as a fidelity factor of the translation reaction, by catalyzing a one-codon backward translocation of tRNAs on improperly translocated ribosomes. Back-translocation proceeds from a post-translocation (POST) complex to a pre-translocation (PRE) complex, thus giving elongation factor G a second chance to translocate the tRNAs correctly. Binds to ribosomes in a GTP-dependent manner. This Streptococcus uberis (strain ATCC BAA-854 / 0140J) protein is Elongation factor 4.